Reading from the N-terminus, the 353-residue chain is Casein kinase II subunit alpha (353 aa).

The region spanning 39-324 (YQLVRKLGRG…AREAMDHPYF (286 aa)) is the Protein kinase domain. Residues 45–53 (LGRGKYSEV) and K68 contribute to the ATP site. The Proton acceptor role is filled by D156. A disordered region spans residues 334–353 (MVSSNSPTPNALQGPISTTE).

It belongs to the protein kinase superfamily. Ser/Thr protein kinase family. CK2 subfamily. As to quaternary structure, tetramer of two alpha and two beta chains.

It carries out the reaction L-seryl-[protein] + ATP = O-phospho-L-seryl-[protein] + ADP + H(+). It catalyses the reaction L-threonyl-[protein] + ATP = O-phospho-L-threonyl-[protein] + ADP + H(+). In terms of biological role, casein kinases are operationally defined by their preferential utilization of acidic proteins such as caseins as substrates. The alpha chain contains the catalytic site. May participate in Wnt signaling. In Spodoptera frugiperda (Fall armyworm), this protein is Casein kinase II subunit alpha.